The sequence spans 215 residues: High mobility group protein B1 (215 aa).

2–10 (GKGDPKKPR) serves as a coordination point for heparin. Residues 2–97 (GKGDPKKPRG…KFKDPNAPKR (96 aa)) form a sufficient for interaction with HAVCR2 region. 4 positions are modified to N6-acetyllysine: lysine 3, lysine 7, lysine 8, and lysine 12. Residues 3–15 (KGDPKKPRGKMSS) are LPS binding (delipidated). The segment at residues 9–79 (PRGKMSSYAF…RYEREMKTYI (71 aa)) is a DNA-binding region (HMG box 1). Cysteine 23 is subject to Cysteine sulfonic acid (-SO3H); alternate. Cysteines 23 and 45 form a disulfide. A Nuclear localization signal (NLS) 1 motif is present at residues 27–43 (HKKKHPDASVNFSEFSK). N6-acetyllysine occurs at positions 28, 29, and 30. Lysine 28 participates in a covalent cross-link: Isoglutamyl lysine isopeptide (Lys-Gln) (interchain with Q-?). Serine 35 is subject to Phosphoserine. Lysine 43 carries the N6-acetyllysine modification. Residues lysine 43 and lysine 44 each participate in an isoglutamyl lysine isopeptide (Lys-Gln) (interchain with Q-?) cross-link. Cysteine 45 carries the post-translational modification Cysteine sulfonic acid (-SO3H); alternate. An Isoglutamyl lysine isopeptide (Lys-Gln) (interchain with Q-?) cross-link involves residue lysine 68. The disordered stretch occupies residues 76-95 (KTYIPPKGETKKKFKDPNAP). The segment at 80-96 (PPKGETKKKFKDPNAPK) is LPS binding (Lipid A). The segment covering 83–94 (GETKKKFKDPNA) has biased composition (basic and acidic residues). Positions 89–108 (FKDPNAPKRPPSAFFLFCSE) are cytokine-stimulating activity. Lysine 90 bears the N6-acetyllysine mark. The segment at residues 95-163 (PKRPPSAFFL…KYEKDIAAYR (69 aa)) is a DNA-binding region (HMG box 2). Serine 100 carries the post-translational modification Phosphoserine. Cysteine 106 is modified (cysteine sulfonic acid (-SO3H)). An N6-acetyllysine mark is found at lysine 127, lysine 128, lysine 141, lysine 172, lysine 173, lysine 177, and lysine 180. Positions 150–183 (KLKEKYEKDIAAYRAKGKPDAAKKGVVKAEKSKK) are binding to AGER/RAGE. Positions 161–179 (AYRAKGKPDAAKKGVVKAE) are enriched in basic and acidic residues. Residues 161–215 (AYRAKGKPDAAKKGVVKAEKSKKKKEEEEDEEDEEDEEEEEDEEDEEEEEDDDDE) form a disordered region. A Nuclear localization signal (NLS) 2 motif is present at residues 178–184 (AEKSKKK). Lysine 180 participates in a covalent cross-link: Isoglutamyl lysine isopeptide (Lys-Gln) (interchain with Q-?). Serine 181 carries the post-translational modification ADP-ribosylserine. N6-acetyllysine occurs at positions 182, 183, 184, and 185. Residues lysine 182, lysine 183, and lysine 184 each participate in an isoglutamyl lysine isopeptide (Lys-Gln) (interchain with Q-?) cross-link. Positions 187-215 (EEEDEEDEEDEEEEEDEEDEEEEEDDDDE) are enriched in acidic residues.

Belongs to the HMGB family. Interacts (fully reduced HMGB1) with CXCL12; probably in a 1:2 ratio involving two molecules of CXCL12, each interacting with one HMG box of HMGB1; inhibited by glycyrrhizin. Associates with the TLR4:LY96 receptor complex. Component of the RAG complex composed of core components RAG1 and RAG2, and associated component HMGB1 or HMGB2. Interacts (in cytoplasm upon starvation) with BECN1; inhibits the interaction of BECN1 and BCL2 leading to promotion of autophagy. Interacts with KPNA1; involved in nuclear import. Interacts with AGER. Interacts with SREBF1, TLR2, TLR4, TLR9, PTPRZ1, APEX1, FEN1, POLB, TERT. Interacts with IL1B, MSH2, XPA, XPC, HNF1A, TP53. Interacts with CD24; the probable CD24:SIGLEC10 complex is proposed to inhibit HGMB1-mediated tissue damage immune response. Interacts with THBD; prevents HGMB1 interaction with ACER/RAGE and inhibits HGMB1 pro-inflammatory activity. Interacts with HAVCR2; impairs HMGB1 binding to B-DNA and likely HMGB1-mediated innate immune response. Interacts with XPO1; mediating nuclear export. Interacts with receptor RAGE/AGER. In terms of processing, phosphorylated at serine residues. Phosphorylation in both NLS regions is required for cytoplasmic translocation followed by secretion. Post-translationally, acetylated on multiple sites upon stimulation with LPS. Acetylation on lysine residues in the nuclear localization signals (NLS 1 and NLS 2) leads to cytoplasmic localization and subsequent secretion. Acetylation on Lys-3 results in preferential binding to DNA ends and impairs DNA bending activity. Reduction/oxidation of cysteine residues Cys-23, Cys-45 and Cys-106 and a possible intramolecular disulfide bond involving Cys-23 and Cys-45 give rise to different redox forms with specific functional activities in various cellular compartments: 1- fully reduced HMGB1 (HMGB1C23hC45hC106h), 2- disulfide HMGB1 (HMGB1C23-C45C106h) and 3- sulfonyl HMGB1 (HMGB1C23soC45soC106so). In terms of processing, poly-ADP-ribosylated by PARP1 when secreted following stimulation with LPS. Post-translationally, in vitro cleavage by CASP1 is liberating a HMG box 1-containing peptide which may mediate immunogenic activity; the peptide antagonizes apoptosis-induced immune tolerance. Can be proteolytically cleaved by a thrombin:thrombomodulin complex; reduces binding to heparin and pro-inflammatory activities. Forms covalent cross-links mediated by transglutaminase TGM2, between a glutamine and the epsilon-amino group of a lysine residue, forming homopolymers and heteropolymers.

The protein localises to the nucleus. It is found in the chromosome. Its subcellular location is the cytoplasm. The protein resides in the secreted. It localises to the cell membrane. The protein localises to the endosome. It is found in the endoplasmic reticulum-Golgi intermediate compartment. In terms of biological role, multifunctional redox sensitive protein with various roles in different cellular compartments. In the nucleus is one of the major chromatin-associated non-histone proteins and acts as a DNA chaperone involved in replication, transcription, chromatin remodeling, V(D)J recombination, DNA repair and genome stability. Proposed to be an universal biosensor for nucleic acids. Promotes host inflammatory response to sterile and infectious signals and is involved in the coordination and integration of innate and adaptive immune responses. In the cytoplasm functions as a sensor and/or chaperone for immunogenic nucleic acids implicating the activation of TLR9-mediated immune responses, and mediates autophagy. Acts as a danger-associated molecular pattern (DAMP) molecule that amplifies immune responses during tissue injury. Released to the extracellular environment can bind DNA, nucleosomes, IL-1 beta, CXCL12, AGER isoform 2/sRAGE, lipopolysaccharide (LPS) and lipoteichoic acid (LTA), and activates cells through engagement of multiple surface receptors. In the extracellular compartment fully reduced HMGB1 (released by necrosis) acts as a chemokine, disulfide HMGB1 (actively secreted) as a cytokine, and sulfonyl HMGB1 (released from apoptotic cells) promotes immunological tolerance. Has proangiogenic activity. May be involved in platelet activation. Binds to phosphatidylserine and phosphatidylethanolamide. Bound to RAGE mediates signaling for neuronal outgrowth. May play a role in accumulation of expanded polyglutamine (polyQ) proteins. Its function is as follows. Nuclear functions are attributed to fully reduced HGMB1. Associates with chromatin and binds DNA with a preference to non-canonical DNA structures such as single-stranded DNA, DNA-containing cruciforms or bent structures, supercoiled DNA and ZDNA. Can bent DNA and enhance DNA flexibility by looping thus providing a mechanism to promote activities on various gene promoters by enhancing transcription factor binding and/or bringing distant regulatory sequences into close proximity. May be involved in nucleotide excision repair (NER), mismatch repair (MMR) and base excision repair (BER) pathways, and double strand break repair such as non-homologous end joining (NHEJ). Involved in V(D)J recombination by acting as a cofactor of the RAG complex: acts by stimulating cleavage and RAG protein binding at the 23 bp spacer of conserved recombination signal sequences (RSS). In vitro can displace histone H1 from highly bent DNA. Can restructure the canonical nucleosome leading to relaxation of structural constraints for transcription factor-binding. Enhances binding of sterol regulatory element-binding proteins (SREBPs) such as SREBF1 to their cognate DNA sequences and increases their transcriptional activities. Facilitates binding of TP53 to DNA. May be involved in mitochondrial quality control and autophagy in a transcription-dependent fashion implicating HSPB1. Can modulate the activity of the telomerase complex and may be involved in telomere maintenance. Functionally, in the cytoplasm proposed to dissociate the BECN1:BCL2 complex via competitive interaction with BECN1 leading to autophagy activation. Involved in oxidative stress-mediated autophagy. Can protect BECN1 and ATG5 from calpain-mediated cleavage and thus proposed to control their proautophagic and proapoptotic functions and to regulate the extent and severity of inflammation-associated cellular injury. In myeloid cells has a protective role against endotoxemia and bacterial infection by promoting autophagy. Involved in endosomal translocation and activation of TLR9 in response to CpG-DNA in macrophages. In the extracellular compartment (following either active secretion or passive release)involved in regulation of the inflammatory response. Fully reduced HGMB1 (which subsequently gets oxidized after release) in association with CXCL12 mediates the recruitment of inflammatory cells during the initial phase of tissue injury; the CXCL12:HMGB1 complex triggers CXCR4 homodimerization. Induces the migration of monocyte-derived immature dendritic cells and seems to regulate adhesive and migratory functions of neutrophils implicating AGER/RAGE and ITGAM. Can bind to various types of DNA and RNA including microbial unmethylated CpG-DNA to enhance the innate immune response to nucleic acids. Proposed to act in promiscuous DNA/RNA sensing which cooperates with subsequent discriminative sensing by specific pattern recognition receptors. Promotes extracellular DNA-induced AIM2 inflammasome activation implicating AGER/RAGE. Disulfide HMGB1 binds to transmembrane receptors, such as AGER/RAGE, TLR2, TLR4 and probably TREM1, thus activating their signal transduction pathways. Mediates the release of cytokines/chemokines such as TNF, IL-1, IL-6, IL-8, CCL2, CCL3, CCL4 and CXCL10. Promotes secretion of interferon-gamma by macrophage-stimulated natural killer (NK) cells in concert with other cytokines like IL-2 or IL-12. TLR4 is proposed to be the primary receptor promoting macrophage activation and signaling through TLR4 seems to implicate LY96/MD-2. In bacterial LPS- or LTA-mediated inflammatory responses binds to the endotoxins and transfers them to CD14 for signaling to the respective TLR4:LY96 and TLR2 complexes. Contributes to tumor proliferation by association with ACER/RAGE. Can bind to IL1-beta and signals through the IL1R1:IL1RAP receptor complex. Binding to class A CpG activates cytokine production in plasmacytoid dendritic cells implicating TLR9, MYD88 and AGER/RAGE and can activate autoreactive B cells. Via HMGB1-containing chromatin immune complexes may also promote B cell responses to endogenous TLR9 ligands through a B-cell receptor (BCR)-dependent and ACER/RAGE-independent mechanism. Inhibits phagocytosis of apoptotic cells by macrophages; the function is dependent on poly-ADP-ribosylation and involves binding to phosphatidylserine on the cell surface of apoptotic cells. In adaptive immunity may be involved in enhancing immunity through activation of effector T-cells and suppression of regulatory T (TReg) cells. In contrast, without implicating effector or regulatory T-cells, required for tumor infiltration and activation of T-cells expressing the lymphotoxin LTA:LTB heterotrimer thus promoting tumor malignant progression. Also reported to limit proliferation of T-cells. Released HMGB1:nucleosome complexes formed during apoptosis can signal through TLR2 to induce cytokine production. Involved in induction of immunological tolerance by apoptotic cells; its pro-inflammatory activities when released by apoptotic cells are neutralized by reactive oxygen species (ROS)-dependent oxidation specifically on Cys-106. During macrophage activation by activated lymphocyte-derived self apoptotic DNA (ALD-DNA) promotes recruitment of ALD-DNA to endosomes. This is High mobility group protein B1 (HMGB1) from Bos taurus (Bovine).